The following is an 86-amino-acid chain: MKVSVLITLAVLGVMFVWASAAELEERGSDQRDSPAWLKSMERIFQSEERECRKMFGGCSVDSDCCAHLGCKPTLKYCAWDGTFGK.

A signal peptide spans 1 to 21; that stretch reads MKVSVLITLAVLGVMFVWASA. Residues 22-50 constitute a propeptide that is removed on maturation; that stretch reads AELEERGSDQRDSPAWLKSMERIFQSEER. Intrachain disulfides connect Cys52-Cys66, Cys59-Cys71, and Cys65-Cys78. At Phe84 the chain carries Phenylalanine amide.

It belongs to the neurotoxin 10 (Hwtx-1) family. 28 (Jztx-11) subfamily. In terms of tissue distribution, expressed by the venom gland.

Its subcellular location is the secreted. Its function is as follows. This toxin acts as a voltage-dependent gating-modifier. It inhibits the sodium conductance (IC(50)=124 nM) and slows the fast inactivation (EC(50)=1180 nM) of Nav1.5/SCN5A. It significantly shifts the activation to more depolarized voltages and decreases the deactivation of Nav1.5 currents upon extreme depolarization, but only slightly affects voltage-dependence of steady-state inactivation. In addition, this toxin causes an approximately five-fold decrease in the rate of recovery from inactivation and an approximately 1.9-fold reduction in the closed-state inactivation rate. This toxin integrates the functions of site 3 toxins (alpha-scorpion toxins) with site 4 toxins (beta-scorpion and spider toxins) by targeting multiple sites on Nav1.5. Also shows inhibition of voltage-gated potassium channels (5 uM completely inhibits Kv2.1/KCNB1, whereas 5 uM moderately inhibits Kv4.2/KCND2 Kv4.1/KCND1 channels). The polypeptide is Kappa-theraphotoxin-Cg1a 6 (Chilobrachys guangxiensis (Chinese earth tiger tarantula)).